A 362-amino-acid polypeptide reads, in one-letter code: MNTFGTRLKFTSFGESHGVAVGCIIDGMPAGVKFDEEFLQNELDKRKGGSKFATPRKESDKAQVLSGVFEGYTTGHPIAIVVFNENAHSKDYDNLKDLFRPAHADFTYFYKYGIRDHRGGGRSSARESVARVAGGAVAAMLLREFDICVQSGVFGVGTFVSNLKEEEFDFEFAKKSEIFCLDPKLESDFKNEILNARNSKDSVGAAVFTKVSGMLVGLGEVLYDKLDSKLAHALMGINAVKAVEIGEGINASKMRGSCHNDALKDGKFLSNHSGGILGGISNGENLILKTYFKPTPSIFAKQESIDKFGNNLEFELKGRHDPCVGVRGSVVASAMVRLVLADCLLLNASANLNNLKNAYGLK.

Arg-46 is a binding site for NADP(+). Residues 122–124 (RSS), 238–239 (NA), Gly-278, 293–297 (KPTPS), and Arg-319 each bind FMN.

Belongs to the chorismate synthase family. As to quaternary structure, homotetramer. The cofactor is FMNH2.

It catalyses the reaction 5-O-(1-carboxyvinyl)-3-phosphoshikimate = chorismate + phosphate. It functions in the pathway metabolic intermediate biosynthesis; chorismate biosynthesis; chorismate from D-erythrose 4-phosphate and phosphoenolpyruvate: step 7/7. In terms of biological role, catalyzes the anti-1,4-elimination of the C-3 phosphate and the C-6 proR hydrogen from 5-enolpyruvylshikimate-3-phosphate (EPSP) to yield chorismate, which is the branch point compound that serves as the starting substrate for the three terminal pathways of aromatic amino acid biosynthesis. This reaction introduces a second double bond into the aromatic ring system. This is Chorismate synthase from Campylobacter jejuni subsp. jejuni serotype O:6 (strain 81116 / NCTC 11828).